A 266-amino-acid polypeptide reads, in one-letter code: tRNA pseudouridine synthase A (266 aa).

Catalysis depends on D56, which acts as the Nucleophile. Y110 provides a ligand contact to substrate.

Belongs to the tRNA pseudouridine synthase TruA family.

The enzyme catalyses uridine(38/39/40) in tRNA = pseudouridine(38/39/40) in tRNA. Its function is as follows. Formation of pseudouridine at positions 38, 39 and 40 in the anticodon stem and loop of transfer RNAs. This chain is tRNA pseudouridine synthase A, found in Halobacterium salinarum (strain ATCC 29341 / DSM 671 / R1).